Consider the following 394-residue polypeptide: Elongation factor Tu (394 aa).

The region spanning 10–204 (KPHVNVGTIG…ALDTYIPEPE (195 aa)) is the tr-type G domain. A G1 region spans residues 19–26 (GHVDHGKT). 19-26 (GHVDHGKT) provides a ligand contact to GTP. A Mg(2+)-binding site is contributed by threonine 26. Positions 60-64 (GITIN) are G2. The G3 stretch occupies residues 81–84 (DCPG). GTP contacts are provided by residues 81 to 85 (DCPGH) and 136 to 139 (NKCD). The segment at 136-139 (NKCD) is G4. Residues 174–176 (SAL) are G5.

The protein belongs to the TRAFAC class translation factor GTPase superfamily. Classic translation factor GTPase family. EF-Tu/EF-1A subfamily. As to quaternary structure, monomer.

It is found in the cytoplasm. The enzyme catalyses GTP + H2O = GDP + phosphate + H(+). Its function is as follows. GTP hydrolase that promotes the GTP-dependent binding of aminoacyl-tRNA to the A-site of ribosomes during protein biosynthesis. This is Elongation factor Tu from Colwellia psychrerythraea (strain 34H / ATCC BAA-681) (Vibrio psychroerythus).